Reading from the N-terminus, the 133-residue chain is ATP synthase epsilon chain (133 aa).

The protein belongs to the ATPase epsilon chain family. F-type ATPases have 2 components, CF(1) - the catalytic core - and CF(0) - the membrane proton channel. CF(1) has five subunits: alpha(3), beta(3), gamma(1), delta(1), epsilon(1). CF(0) has three main subunits: a, b and c.

The protein localises to the cell inner membrane. In terms of biological role, produces ATP from ADP in the presence of a proton gradient across the membrane. This Paramagnetospirillum magneticum (strain ATCC 700264 / AMB-1) (Magnetospirillum magneticum) protein is ATP synthase epsilon chain.